A 3329-amino-acid polypeptide reads, in one-letter code: Breast cancer type 2 susceptibility protein homolog (3329 aa).

The tract at residues 1 to 40 (MPVEYKRRPTFWEIFKARCSTADLGPISLNWFEELSSEAP) is interaction with PALB2. 2 disordered regions span residues 37-69 (SEAP…QRNP) and 207-241 (EARS…SVPS). Residues serine 435 and serine 481 each carry the phosphoserine modification. Residues 628–650 (PDSSDKKRCLPNDPEEPSLTNSF) form a disordered region. The interaction with NPM1 stretch occupies residues 628–979 (PDSSDKKRCL…DKWSEFLDPV (352 aa)). Serine 735 is modified (phosphoserine). Residues 934 to 953 (EKSRNNIEQHQKGTEDKDFK) are compositionally biased toward basic and acidic residues. The segment at 934 to 965 (EKSRNNIEQHQKGTEDKDFKSNSSLNMKSDGN) is disordered. Residues 954 to 965 (SNSSLNMKSDGN) are compositionally biased toward polar residues. BRCA2 repeat units lie at residues 981-1015 (NHNF…DIEE) and 1192-1226 (NEME…DIEN). Positions 982 to 2035 (HNFGGSFRTA…LHKVKGMLEE (1054 aa)) are interaction with RAD51. The segment at 1296 to 1340 (NTKHEDSYTSSQRNNLENSDGSMSSTSGPVYIHKGDSDLPADQGS) is disordered. The segment covering 1303-1323 (YTSSQRNNLENSDGSMSSTSG) has biased composition (polar residues). 5 BRCA2 repeats span residues 1394 to 1428 (IKEF…RETD), 1491 to 1525 (KEPT…ETQY), 1623 to 1657 (TEDS…EQGD), 1924 to 1958 (PSRT…EMDG), and 2004 to 2038 (NSSV…EFDL). Serine 2048 is modified (phosphoserine). The segment at 2073–2099 (NSKLQKTYNDKSSLPSNYKESGSSGNT) is disordered. Positions 2074 to 2099 (SKLQKTYNDKSSLPSNYKESGSSGNT) are enriched in polar residues. Residues 2219 to 2285 (KRGGVTVDAV…EPVTCGPFCS (67 aa)) are interaction with HSF2BP. The tract at residues 2298-2466 (TSPAQELLSK…SPKQLYIYGV (169 aa)) is interaction with FANCD2. Residues 2361-2393 (FHGDEHFNSKNVNLEGKNQKSTDGDREDGNDSH) form a disordered region. The segment covering 2377–2393 (KNQKSTDGDREDGNDSH) has biased composition (basic and acidic residues). An interaction with SEM1 region spans residues 2402–2753 (MSSLQSARDL…QRVYPLQWVE (352 aa)). A Nuclear export signal; masked by interaction with SEM1 motif is present at residues 2603–2619 (AAKTLVLCISDIISPST). At serine 3214 the chain carries Phosphoserine; by CDK1 and CDK2. Disordered regions lie at residues 3221–3257 (FQPP…VSLP) and 3273–3329 (QALT…AVES). Residue serine 3241 is modified to Phosphoserine. Residues 3309 to 3329 (SRKESLRDCRGDSSEKLAVES) show a composition bias toward basic and acidic residues.

As to quaternary structure, monomer and dimer. Interacts with RAD51; regulates RAD51 recruitment and function at sites of DNA repair. Interacts with SEM1, WDR16, USP11, DMC1, ROCK2 and NPM1. Interacts with both nonubiquitinated and monoubiquitinated FANCD2; this complex also includes XRCC3 and phosphorylated FANCG. Part of a BRCA complex containing BRCA1, BRCA2 and PALB2. Component of the homologous recombination repair (HR) complex composed of ERCC5/XPG, BRCA2, PALB2, DSS1 and RAD51. Within the complex, interacts with ERCC5/XPG and PALB2. Interacts directly with PALB2 which may serve as a scaffold for a HR complex containing PALB2, BRCA2, RAD51C, RAD51 and XRCC3. Interacts with BRCA1 only in the presence of PALB2 which serves as the bridging protein. Interacts with POLH; the interaction is direct. Interacts with the TREX-2 complex subunits PCID2 and SEM1. Interacts with HSF2BP and BRME1; the interaction with HSF2BP is direct and allows the formation of a ternary complex. The complex BRME1:HSF2BP:BRCA2 interacts with SPATA22, MEIOB and RAD51. Post-translationally, phosphorylated by ATM upon irradiation-induced DNA damage. Phosphorylation by CHEK1 and CHEK2 regulates interaction with RAD51. Phosphorylation at Ser-3291 by CDK1 and CDK2 is low in S phase when recombination is active, but increases as cells progress towards mitosis; this phosphorylation prevents homologous recombination-dependent repair during S phase and G2 by inhibiting RAD51 binding. In terms of processing, ubiquitinated in the absence of DNA damage; this does not lead to proteasomal degradation. In contrast, ubiquitination in response to DNA damage leads to proteasomal degradation. Widely expressed. Highest expression in cerebellum, testis, ileum, appendix, epididymis, ovary and mammary gland. No expression in lung.

It localises to the nucleus. The protein resides in the cytoplasm. It is found in the cytoskeleton. The protein localises to the microtubule organizing center. Its subcellular location is the centrosome. Involved in double-strand break repair and/or homologous recombination. Binds RAD51 and potentiates recombinational DNA repair by promoting assembly of RAD51 onto single-stranded DNA (ssDNA). Acts by targeting RAD51 to ssDNA over double-stranded DNA, enabling RAD51 to displace replication protein-A (RPA) from ssDNA and stabilizing RAD51-ssDNA filaments by blocking ATP hydrolysis. Part of a PALB2-scaffolded HR complex containing RAD51C and which is thought to play a role in DNA repair by HR. May participate in S phase checkpoint activation. Binds selectively to ssDNA, and to ssDNA in tailed duplexes and replication fork structures. May play a role in the extension step after strand invasion at replication-dependent DNA double-strand breaks; together with PALB2 is involved in both POLH localization at collapsed replication forks and DNA polymerization activity. In concert with NPM1, regulates centrosome duplication. Interacts with the TREX-2 complex (transcription and export complex 2) subunits PCID2 and SEM1, and is required to prevent R-loop-associated DNA damage and thus transcription-associated genomic instability, independently of its known role in homologous recombination. The protein is Breast cancer type 2 susceptibility protein homolog of Mus musculus (Mouse).